The primary structure comprises 98 residues: Large ribosomal subunit protein bL28 (98 aa).

Belongs to the bacterial ribosomal protein bL28 family.

This Chelativorans sp. (strain BNC1) protein is Large ribosomal subunit protein bL28.